We begin with the raw amino-acid sequence, 92 residues long: MKFEAVVRTEQGKGASRRLRHAGKFPAIVYGGTEAPVSIELIHFDVINQMDKPEFYEAIELVIDGATVKVKPQDVQRHAFKPKVEHMDFIRI.

It belongs to the bacterial ribosomal protein bL25 family. As to quaternary structure, part of the 50S ribosomal subunit; part of the 5S rRNA/L5/L18/L25 subcomplex. Contacts the 5S rRNA. Binds to the 5S rRNA independently of L5 and L18.

This is one of the proteins that binds to the 5S RNA in the ribosome where it forms part of the central protuberance. The protein is Large ribosomal subunit protein bL25 of Aliivibrio salmonicida (strain LFI1238) (Vibrio salmonicida (strain LFI1238)).